The primary structure comprises 178 residues: uncharacterized protein (178 aa).

This is an uncharacterized protein from Cestrum parqui (CmYLCV).